The chain runs to 1498 residues: MIFSQGVSPFKGDFSKIKFSIASPESILAHSRGEVLKPETINYRTFKPERDGLMCEKIFGPTKDWECYCGKYKRVRYKGIICDRCGVEVTMKSVRRERMGHISLAVPVVHTWFFRSVPSKIGALLDLSTKELERVIYYEVYVVINPGEPGEKQGIKKLDRLTEEQYFQIITEYEDNQDLDDNDPAKFVAKMGGEAIHTLLKGLELDTQAVDLRKILRESGSEQKRADALKRLKVVEAFRKSFEPVKKTRKKSTGLFPEDEAPEPYVYEGNKPEYMVMEVIPVIPPELRPLVPLEGGRFATSDLNDLYRRVIIRNNRLKKLIDIRAPEVILRNEKRMLQEAVDALFDNSRKANAVKTGESNRPLKSLSDALKGKQGRFRQNLLGKRVDYSGRSVIVVGPELKLHECGLPKSMAIELFQPFVIRRLVERGIAKSVKSAKKLIDKKDPIVWDVLEKVIDGRPVLLNRAPTLHRLGIQAFQPVLIEGKAIQIHPLVCTAFNADFDGDQMAVHVPLSQEAQLEATLLMLSSHNLILPQSGKPVTVPSQDMVLGMYYLTKSRLGEKGQGKLFYGTEEVMIAFNEERIGLHALVFVHYDGRIEQKFDPLRMLDIIPDDQPEQKEWLKTKIGENKILVTTVGRVLFNRYVPEKIGFINKVIDKKGAKDLISKLSSEVGNVATAEFLDNIKQVGFHFAMKGGLSIGLADAIIPEVKVQHIKKATKESTKIVREYNRGTLTENERYNQIVDVWQKVTNLVAEESYQKLRKDRSGFNPLFMMLDSGARGSREQVRQLTGMRGLIARPQKSMSGQPGEIIENPIISNLKEGLTVLEYFVSTHGARKGLSDTSLKTADAGYLTRRLHDVAQDVIVTEDDCGTTRGIHVERGIEEETGGQIKFSEKIRGRVASRDIVDNLNDVVILPAGGIITDEIADAIQKNAGVVEADIRSVLTCEAKQGICSKCYGTNLSVHKLVEIGEAVGVIAAQSIGEPGTQLTLRTFHQGGTAQGGIAETETKSSMDGQVEFESIRSVEQETINEDGMPETVTLVIQKNGKINILDPDSGKFLKRYEVPHGAHLVCKNGDIVKKDDVLFSSEPNSTQIIAEVEGEVKFVDIDKGVTYKEEVDPQTGYVQHVIINWRTKLRASETREPRILIVDKEGETLKTYPVPIKSNLFIENGKKVKIGDMLAKVPRNLDRVGGDITAGLPKVTELFEARIPSDPAIVSEIDGYVGFGPQRRSSKEIKVKNEFGEEKNYYVQVGKHVLANEGDEVTAGEPLTDGAVSPQDILRIQGPNAVQQYLVNEIQKVYQINAGVEINDKHLEVIVRQMLQKVRVEEPGDTELLPGDLIDRTMFIRANSDVSEKVRVTSKGDAPARIHEGQLYKTREIIKLNRELRRNSKQLIDVEPALQATSHPVLLGITSAALQTESVISAASFQETTKVLTDAAVAGKIDNLAGLKENVIVGKLIPAGTGLKKYLKLSLDMLAEGKESADALAEEEAGAAESGEDDA.

4 residues coordinate Zn(2+): Cys67, Cys69, Cys82, and Cys85. The Mg(2+) site is built by Asp499, Asp501, and Asp503. Cys867, Cys943, Cys950, and Cys953 together coordinate Zn(2+).

The protein belongs to the RNA polymerase beta' chain family. The RNAP catalytic core consists of 2 alpha, 1 beta, 1 beta' and 1 omega subunit. When a sigma factor is associated with the core the holoenzyme is formed, which can initiate transcription. Mg(2+) is required as a cofactor. It depends on Zn(2+) as a cofactor.

The enzyme catalyses RNA(n) + a ribonucleoside 5'-triphosphate = RNA(n+1) + diphosphate. DNA-dependent RNA polymerase catalyzes the transcription of DNA into RNA using the four ribonucleoside triphosphates as substrates. This is DNA-directed RNA polymerase subunit beta' from Chlorobium phaeobacteroides (strain BS1).